The chain runs to 125 residues: Multifunctional methyltransferase subunit TRM112-like protein (125 aa).

The TRM112 domain maps to 2 to 119; it reads KLLTHNLLSS…SRGIPNMLLN (118 aa).

Belongs to the TRM112 family. Part of the heterodimeric BUD23-TRM112 methyltransferase complex; this heterodimerization is necessary for the metabolic stability and activity of the catalytic subunit BUD23. Part of the heterodimeric N6AMT1-TRM112 methyltransferase complex; this heterodimerization is necessary for S-adenosyl-L-methionine-binding to N6AMT1/HEMK2. Part of the heterodimeric ALKBH8-TRM112 methyltransferase complex. Part of the heterodimeric METTL5-TRM112 methyltransferase complex; this heterodimerization is necessary for the stability of the catalytic subunit METTL5. Part of the heterodimeric THUMPD3-TRM112 methyltransferase complex; this complex forms an active tRNA methyltransferase, where TRMT112 acts as an activator of the catalytic subunit THUMPD3. Part of the heterodimeric THUMPD2-TRM112 methyltransferase complex; this complex forms an active tRNA methyltransferase, where TRMT112 acts as an activator of the catalytic subunit THUMPD2. Part of the heterodimeric TRMT11-TRM112 methyltransferase complex; this complex forms an active tRNA methyltransferase, where TRMT112 acts as an activator of the catalytic subunit TRMT11. As to expression, abundantly expressed in the testis, also expressed in the brain, heart, kidney, liver, lung, muscle and spleen.

The protein localises to the nucleus. The protein resides in the nucleoplasm. Its subcellular location is the cytoplasm. It localises to the perinuclear region. Acts as an activator of both rRNA/tRNA and protein methyltransferases. Together with methyltransferase BUD23, methylates the N(7) position of a guanine in 18S rRNA. The heterodimer with HEMK2/N6AMT1 catalyzes N5-methylation of ETF1 on 'Gln-185', using S-adenosyl L-methionine as methyl donor. The heterodimer with ALKBH8 catalyzes the methylation of 5-carboxymethyl uridine to 5-methylcarboxymethyl uridine at the wobble position of the anticodon loop in target tRNA species. Together with methyltransferase THUMPD3, catalyzes the formation of N(2)-methylguanosine at position 6 in a broad range of tRNA substrates and at position 7 of tRNA(Trp). Involved in the pre-rRNA processing steps leading to small-subunit rRNA production. Together with methyltransferase METTL5, specifically methylates the 6th position of adenine in position 1832 of 18S rRNA. This chain is Multifunctional methyltransferase subunit TRM112-like protein (Trmt112), found in Mus musculus (Mouse).